The primary structure comprises 167 residues: Protein-lysine myristoyltransferase RtxC (167 aa).

Residues His20 and Asp89 contribute to the active site.

Belongs to the RTX toxin acyltransferase family.

It is found in the cytoplasm. The enzyme catalyses tetradecanoyl-[ACP] + L-lysyl-[protein] = N(6)-tetradecanoyl-L-lysyl-[protein] + holo-[ACP] + H(+). In terms of biological role, protein-lysine myristoyltransferase that catalyzes myristoylation of the protoxin (RtxA) at two internal lysine residues, thereby converting it to the active toxin. The polypeptide is Protein-lysine myristoyltransferase RtxC (Kingella kingae).